The sequence spans 238 residues: Purine nucleoside phosphorylase DeoD-type 1 (238 aa).

His-5 contributes to the a purine D-ribonucleoside binding site. Residues Gly-21, Arg-25, Arg-44, and 88-91 each bind phosphate; that span reads RVGS. A purine D-ribonucleoside is bound by residues 180-182 and 204-205; these read EME and SD. Asp-205 serves as the catalytic Proton donor.

Belongs to the PNP/UDP phosphorylase family. In terms of assembly, homohexamer; trimer of homodimers.

The catalysed reaction is a purine D-ribonucleoside + phosphate = a purine nucleobase + alpha-D-ribose 1-phosphate. It catalyses the reaction a purine 2'-deoxy-D-ribonucleoside + phosphate = a purine nucleobase + 2-deoxy-alpha-D-ribose 1-phosphate. Functionally, catalyzes the reversible phosphorolytic breakdown of the N-glycosidic bond in the beta-(deoxy)ribonucleoside molecules, with the formation of the corresponding free purine bases and pentose-1-phosphate. The polypeptide is Purine nucleoside phosphorylase DeoD-type 1 (Aliivibrio fischeri (strain ATCC 700601 / ES114) (Vibrio fischeri)).